Reading from the N-terminus, the 256-residue chain is Acetyl-coenzyme A carboxylase carboxyl transferase subunit beta 2 (256 aa).

In terms of domain architecture, CoA carboxyltransferase N-terminal spans 1 to 256 (MTVKCNKCKE…LAIHAETVSA (256 aa)). Zn(2+) contacts are provided by C5, C8, C24, and C27. The segment at 5–27 (CNKCKEEINKEDLEKNYYICPLC) adopts a C4-type zinc-finger fold.

Belongs to the AccD/PCCB family. As to quaternary structure, acetyl-CoA carboxylase is a heterohexamer composed of biotin carboxyl carrier protein (AccB), biotin carboxylase (AccC) and two subunits each of ACCase subunit alpha (AccA) and ACCase subunit beta (AccD). The cofactor is Zn(2+).

It localises to the cytoplasm. It catalyses the reaction N(6)-carboxybiotinyl-L-lysyl-[protein] + acetyl-CoA = N(6)-biotinyl-L-lysyl-[protein] + malonyl-CoA. It functions in the pathway lipid metabolism; malonyl-CoA biosynthesis; malonyl-CoA from acetyl-CoA: step 1/1. Functionally, component of the acetyl coenzyme A carboxylase (ACC) complex. Biotin carboxylase (BC) catalyzes the carboxylation of biotin on its carrier protein (BCCP) and then the CO(2) group is transferred by the transcarboxylase to acetyl-CoA to form malonyl-CoA. The sequence is that of Acetyl-coenzyme A carboxylase carboxyl transferase subunit beta 2 from Lachnospira eligens (strain ATCC 27750 / DSM 3376 / VPI C15-48 / C15-B4) (Eubacterium eligens).